The following is a 474-amino-acid chain: tRNA-2-methylthio-N(6)-dimethylallyladenosine synthase (474 aa).

In terms of domain architecture, MTTase N-terminal spans 3–120; sequence KKLHIKTWGC…LPEMINSVRG (118 aa). [4Fe-4S] cluster-binding residues include Cys12, Cys49, Cys83, Cys157, Cys161, and Cys164. A Radical SAM core domain is found at 143–375; it reads RAEGPTAFVS…QERINQQAMA (233 aa). In terms of domain architecture, TRAM spans 378 to 441; it reads RRMLGSTQRI…PNSLRGKVVR (64 aa).

The protein belongs to the methylthiotransferase family. MiaB subfamily. As to quaternary structure, monomer. Requires [4Fe-4S] cluster as cofactor.

Its subcellular location is the cytoplasm. The enzyme catalyses N(6)-dimethylallyladenosine(37) in tRNA + (sulfur carrier)-SH + AH2 + 2 S-adenosyl-L-methionine = 2-methylsulfanyl-N(6)-dimethylallyladenosine(37) in tRNA + (sulfur carrier)-H + 5'-deoxyadenosine + L-methionine + A + S-adenosyl-L-homocysteine + 2 H(+). Functionally, catalyzes the methylthiolation of N6-(dimethylallyl)adenosine (i(6)A), leading to the formation of 2-methylthio-N6-(dimethylallyl)adenosine (ms(2)i(6)A) at position 37 in tRNAs that read codons beginning with uridine. The chain is tRNA-2-methylthio-N(6)-dimethylallyladenosine synthase from Salmonella arizonae (strain ATCC BAA-731 / CDC346-86 / RSK2980).